The chain runs to 1101 residues: Cytospin-A (1101 aa).

Disordered regions lie at residues 1–170 (MRKA…NQIS) and 280–366 (SDCG…SGNA). Polar residues-rich tracts occupy residues 29–48 (ESSA…LSKA) and 64–86 (ASNS…TAMS). Low complexity predominate over residues 93–110 (RSSAGSSSNTKRSGSSGA). Composition is skewed to basic and acidic residues over residues 114 to 125 (GSSRERLRERSR) and 151 to 165 (GRTD…KSKS). A coiled-coil region spans residues 162–254 (KSKSDNQISD…LKDRLNALGF (93 aa)). Residues 333-355 (LTSSDDALDAPSSSSESEGLPST) show a composition bias toward low complexity. Coiled coils occupy residues 373–427 (CLTE…MDSL) and 492–785 (QHLS…RGRV). The interval 923–978 (SISVSRRSSEELKRDISVPDGSSAPSLMVMTSPSPQLSLSSSSPTASVTPTARSRI) is disordered. The span at 929 to 939 (RSSEELKRDIS) shows a compositional bias: basic and acidic residues. Over residues 953-975 (TSPSPQLSLSSSSPTASVTPTAR) the composition is skewed to low complexity. In terms of domain architecture, Calponin-homology (CH) spans 995–1100 (GSKRNALLKW…YVTSIYKYFE (106 aa)).

Belongs to the cytospin-A family. May interact with both microtubules and actin cytoskeleton.

The protein localises to the cytoplasm. It is found in the cytoskeleton. Its subcellular location is the spindle. The protein resides in the cell junction. It localises to the gap junction. Its function is as follows. Involved in cytokinesis and spindle organization. May play a role in actin cytoskeleton organization and microtubule stabilization and hence required for proper cell adhesion and migration. This Xenopus tropicalis (Western clawed frog) protein is Cytospin-A (specc1l).